The sequence spans 167 residues: NADH-quinone oxidoreductase subunit B (167 aa).

[4Fe-4S] cluster is bound by residues Cys40, Cys41, Cys105, and Cys134.

It belongs to the complex I 20 kDa subunit family. As to quaternary structure, NDH-1 is composed of 14 different subunits. Subunits NuoB, C, D, E, F, and G constitute the peripheral sector of the complex. [4Fe-4S] cluster is required as a cofactor.

It localises to the cell inner membrane. It carries out the reaction a quinone + NADH + 5 H(+)(in) = a quinol + NAD(+) + 4 H(+)(out). Its function is as follows. NDH-1 shuttles electrons from NADH, via FMN and iron-sulfur (Fe-S) centers, to quinones in the respiratory chain. The immediate electron acceptor for the enzyme in this species is believed to be ubiquinone. Couples the redox reaction to proton translocation (for every two electrons transferred, four hydrogen ions are translocated across the cytoplasmic membrane), and thus conserves the redox energy in a proton gradient. This Campylobacter jejuni (strain RM1221) protein is NADH-quinone oxidoreductase subunit B.